A 430-amino-acid chain; its full sequence is NADH-quinone oxidoreductase subunit D 1 (430 aa).

Positions 1–36 (MSEAKGVGGIDPRATPGSAGAGERPPMGTVSRAGDG) are disordered.

This sequence belongs to the complex I 49 kDa subunit family. As to quaternary structure, NDH-1 is composed of 14 different subunits. Subunits NuoB, C, D, E, F, and G constitute the peripheral sector of the complex.

The protein localises to the cell inner membrane. The catalysed reaction is a quinone + NADH + 5 H(+)(in) = a quinol + NAD(+) + 4 H(+)(out). In terms of biological role, NDH-1 shuttles electrons from NADH, via FMN and iron-sulfur (Fe-S) centers, to quinones in the respiratory chain. The immediate electron acceptor for the enzyme in this species is believed to be ubiquinone. Couples the redox reaction to proton translocation (for every two electrons transferred, four hydrogen ions are translocated across the cytoplasmic membrane), and thus conserves the redox energy in a proton gradient. In Anaeromyxobacter dehalogenans (strain 2CP-C), this protein is NADH-quinone oxidoreductase subunit D 1.